A 142-amino-acid chain; its full sequence is Large ribosomal subunit protein uL11 (142 aa).

The protein belongs to the universal ribosomal protein uL11 family. In terms of assembly, part of the ribosomal stalk of the 50S ribosomal subunit. Interacts with L10 and the large rRNA to form the base of the stalk. L10 forms an elongated spine to which L12 dimers bind in a sequential fashion forming a multimeric L10(L12)X complex. In terms of processing, one or more lysine residues are methylated.

Its function is as follows. Forms part of the ribosomal stalk which helps the ribosome interact with GTP-bound translation factors. In Methylocella silvestris (strain DSM 15510 / CIP 108128 / LMG 27833 / NCIMB 13906 / BL2), this protein is Large ribosomal subunit protein uL11.